The primary structure comprises 527 residues: Transcription factor bHLH157 (527 aa).

Disordered regions lie at residues 295-318 (SGVN…LFPQ) and 335-368 (SSIG…KDRQ). Residues 307 to 318 (TSSAHSSSLFPQ) are compositionally biased toward polar residues. The short motif at 341–348 (WKKPHEEG) is the Nuclear localization signal element. Over residues 343–368 (KPHEEGVKKKRAKAGESRRPRPKDRQ) the composition is skewed to basic and acidic residues. The bHLH domain maps to 354–403 (AKAGESRRPRPKDRQMIQDRIKELRGMIPNGAKCSIDTLLDLTIKHMVFM).

The protein belongs to the bHLH protein family. LHW subfamily. As to quaternary structure, homodimer.

It localises to the nucleus. Functionally, transcription factor that may regulate root development. The sequence is that of Transcription factor bHLH157 (BHLH157) from Arabidopsis thaliana (Mouse-ear cress).